We begin with the raw amino-acid sequence, 609 residues long: Protein tesmin/TSO1-like CXC 3 (609 aa).

Residues 69–84 (ESRFRSQKDVSASKEV) are compositionally biased toward basic and acidic residues. Disordered regions lie at residues 69 to 102 (ESRF…YKND), 307 to 328 (PISP…SSCK), 457 to 477 (LFEQ…KTQQ), and 569 to 609 (NSKR…TPHH). The region spanning 326–451 (SCKRCNCKKS…RCEGCKNAFG (126 aa)) is the CRC domain. Positions 466–477 (TSGTPGTKKTQQ) are enriched in polar residues.

This sequence belongs to the lin-54 family. Ubiquitous but expressed mostly in flowers and at significant levels in leaves. Detected with highest levels in developing ovules and microspores, and in petals.

It localises to the nucleus. Functionally, plays a role in development of both male and female reproductive tissues. This is Protein tesmin/TSO1-like CXC 3 (TCX3) from Arabidopsis thaliana (Mouse-ear cress).